The following is a 243-amino-acid chain: MNASQDTIYAQASEHISDFQFDNRVAGVFSDMIRRSVPGYTQIINTIGDFADRFVKPNTQVYDLGCSLGAATLSIRRQIQGRDCRIIAVDNSESMVTRCQENLNAYVSDTEVELICGDIRDIHIENASLVVLNFTLQFLPPEDREALIAKIYHGLNPGGLLVLSEKIRFDDAPIQSVLEELHLDFKRANGYSELEISQKRSALENVMKPDTLTLHQQRLTRQGFSHFSLWFQCFNFSSMVAIK.

Residues Tyr-40, 65 to 67, 90 to 91, 118 to 119, Asn-133, and Arg-200 contribute to the S-adenosyl-L-methionine site; these read GCS, DN, and DI.

The protein belongs to the class I-like SAM-binding methyltransferase superfamily. Cx-SAM synthase family. In terms of assembly, homodimer.

It carries out the reaction prephenate + S-adenosyl-L-methionine = carboxy-S-adenosyl-L-methionine + 3-phenylpyruvate + H2O. In terms of biological role, catalyzes the conversion of S-adenosyl-L-methionine (SAM) to carboxy-S-adenosyl-L-methionine (Cx-SAM). The chain is Carboxy-S-adenosyl-L-methionine synthase from Shewanella sp. (strain ANA-3).